A 425-amino-acid chain; its full sequence is Inner membrane protein YqcE (425 aa).

At 1–8 the chain is on the cytoplasmic side; sequence MQHNSYRR. The helical transmembrane segment at 9-29 threads the bilayer; the sequence is WITLAIISFSGGVSFDLAYLR. Over 30-48 the chain is Periplasmic; sequence YIYQIPMAKFMGFSNTEIG. A helical membrane pass occupies residues 49 to 69; it reads LIMSTFGIAAIILYAPSGVIA. The Cytoplasmic segment spans residues 70–75; sequence DKFSHR. Transmembrane regions (helical) follow at residues 76-96 and 97-117; these read KMIT…ATYP and PLWV…LMLW. The Cytoplasmic portion of the chain corresponds to 118 to 138; sequence SVSIKAASLLGDHSEQGKIMG. Residues 139–159 form a helical membrane-spanning segment; the sequence is WMEGLRGVGVMSLAVFTMWVF. The Periplasmic portion of the chain corresponds to 160–171; it reads SRFAPDDSTSLK. The helical transmembrane segment at 172-192 threads the bilayer; that stretch reads TVIIIYSVVYILLGILCWFFV. The Cytoplasmic segment spans residues 193 to 219; the sequence is SDNNNLRSANNEEKQSFQLSDILAVLR. Residues 220–240 form a helical membrane-spanning segment; the sequence is ISTTWYCSMVIFGVFTIYAIL. At 241 to 259 the chain is on the periplasmic side; that stretch reads SYSTNYLTEMYGMSLVAAS. Residues 260–280 traverse the membrane as a helical segment; that stretch reads YMGIVINKIFRALCGPLGGII. Topologically, residues 281 to 291 are cytoplasmic; the sequence is TTYSKVKSPTR. The helical transmembrane segment at 292 to 312 threads the bilayer; that stretch reads VIQILSVLGLLTLTALLVTNS. A topological domain (periplasmic) is located at residue asparagine 313. Residues 314 to 334 traverse the membrane as a helical segment; it reads PQSVAMGIGLILLLGFTCYAS. Residues 335 to 354 lie on the Cytoplasmic side of the membrane; that stretch reads RGLYWACPGEARTPSYIMGT. The helical transmembrane segment at 355–375 threads the bilayer; that stretch reads TVGICSVIGFLPDVFVYPIIG. The Periplasmic portion of the chain corresponds to 376–388; sequence HWQDTLPAAEAYR. A helical membrane pass occupies residues 389 to 409; the sequence is NMWLMGMAALGMVIVFTFLLF. The Cytoplasmic portion of the chain corresponds to 410–425; that stretch reads QKIRTADSAPAMASSK.

It to E.coli YihN.

It localises to the cell inner membrane. The protein is Inner membrane protein YqcE (yqcE) of Escherichia coli (strain K12).